Consider the following 383-residue polypeptide: Opsin Rh3 (383 aa).

The Extracellular portion of the chain corresponds to 1 to 57 (MESGNVSSSLFGNVSTALRPEARLSAETRLLGWNVPPEELRHIPEHWLTYPEPPESM). N-linked (GlcNAc...) asparagine glycosylation is present at Asn-13. Residues 58–82 (NYLLGTLYIFFTLMSMLGNGLVIWV) traverse the membrane as a helical segment. Residues 83–94 (FSAAKSLRTPSN) are Cytoplasmic-facing. A helical transmembrane segment spans residues 95–119 (ILVINLAFCDFMMMVKTPIFIYNSF). Residues 120–133 (HQGYALGHLGCQIF) are Extracellular-facing. Cys-130 and Cys-207 are joined by a disulfide. The chain crosses the membrane as a helical span at residues 134–153 (GIIGSYTGIAAGATNAFIAY). The Cytoplasmic portion of the chain corresponds to 154–171 (DRFNVITRPMEGKMTHGK). Residues 172 to 196 (AIAMIIFIYMYATPWVVACYTETWG) form a helical membrane-spanning segment. The Extracellular segment spans residues 197-220 (RFVPEGYLTSCTFDYLTDNFDTRL). A helical membrane pass occupies residues 221 to 248 (FVACIFFFSFVCPTTMITYYYSQIVGHV). The Cytoplasmic segment spans residues 249-284 (FSHEKALRDQAKKMNVESLRSNVDKNKETAEIRIAK). The chain crosses the membrane as a helical span at residues 285–308 (AAITICFLFFCSWTPYGVMSLIGA). The Extracellular segment spans residues 309–316 (FGDKTLLT). Residues 317–341 (PGATMIPACACKMVACIDPFVYAIS) form a helical membrane-spanning segment. Lys-328 bears the N6-(retinylidene)lysine mark. The Cytoplasmic portion of the chain corresponds to 342-383 (HPRYRMELQKRCPWLALNEKAPESSAVASTSTTQEPQQTTAA). The disordered stretch occupies residues 362–383 (APESSAVASTSTTQEPQQTTAA). Positions 369–383 (ASTSTTQEPQQTTAA) are enriched in low complexity.

The protein belongs to the G-protein coupled receptor 1 family. Opsin subfamily. Post-translationally, phosphorylated on some or all of the serine and threonine residues present in the C-terminal region.

The protein resides in the membrane. In terms of biological role, visual pigments are the light-absorbing molecules that mediate vision. They consist of an apoprotein, opsin, covalently linked to cis-retinal. This Drosophila melanogaster (Fruit fly) protein is Opsin Rh3 (Rh3).